Here is a 473-residue protein sequence, read N- to C-terminus: Cysteine--tRNA ligase (473 aa).

Cys-27 is a binding site for Zn(2+). The 'HIGH' region motif lies at 29–39 (ITPYDHMHVGH). Zn(2+)-binding residues include Cys-213, His-238, and Glu-242. The 'KMSKS' region motif lies at 271 to 275 (KMSKS). ATP is bound at residue Lys-274.

Belongs to the class-I aminoacyl-tRNA synthetase family. The cofactor is Zn(2+).

The protein localises to the cytoplasm. The catalysed reaction is tRNA(Cys) + L-cysteine + ATP = L-cysteinyl-tRNA(Cys) + AMP + diphosphate. This is Cysteine--tRNA ligase from Pyrobaculum islandicum (strain DSM 4184 / JCM 9189 / GEO3).